Here is a 252-residue protein sequence, read N- to C-terminus: 2-succinyl-6-hydroxy-2,4-cyclohexadiene-1-carboxylate synthase (252 aa).

This sequence belongs to the AB hydrolase superfamily. MenH family. As to quaternary structure, monomer.

The enzyme catalyses 5-enolpyruvoyl-6-hydroxy-2-succinyl-cyclohex-3-ene-1-carboxylate = (1R,6R)-6-hydroxy-2-succinyl-cyclohexa-2,4-diene-1-carboxylate + pyruvate. Its pathway is quinol/quinone metabolism; 1,4-dihydroxy-2-naphthoate biosynthesis; 1,4-dihydroxy-2-naphthoate from chorismate: step 3/7. It functions in the pathway quinol/quinone metabolism; menaquinone biosynthesis. Its function is as follows. Catalyzes a proton abstraction reaction that results in 2,5-elimination of pyruvate from 2-succinyl-5-enolpyruvyl-6-hydroxy-3-cyclohexene-1-carboxylate (SEPHCHC) and the formation of 2-succinyl-6-hydroxy-2,4-cyclohexadiene-1-carboxylate (SHCHC). In Salmonella paratyphi B (strain ATCC BAA-1250 / SPB7), this protein is 2-succinyl-6-hydroxy-2,4-cyclohexadiene-1-carboxylate synthase.